The primary structure comprises 194 residues: ATP-dependent Clp protease proteolytic subunit (194 aa).

The active-site Nucleophile is Ser98. His123 is an active-site residue.

This sequence belongs to the peptidase S14 family. Fourteen ClpP subunits assemble into 2 heptameric rings which stack back to back to give a disk-like structure with a central cavity, resembling the structure of eukaryotic proteasomes.

The protein localises to the cytoplasm. The enzyme catalyses Hydrolysis of proteins to small peptides in the presence of ATP and magnesium. alpha-casein is the usual test substrate. In the absence of ATP, only oligopeptides shorter than five residues are hydrolyzed (such as succinyl-Leu-Tyr-|-NHMec, and Leu-Tyr-Leu-|-Tyr-Trp, in which cleavage of the -Tyr-|-Leu- and -Tyr-|-Trp bonds also occurs).. Cleaves peptides in various proteins in a process that requires ATP hydrolysis. Has a chymotrypsin-like activity. Plays a major role in the degradation of misfolded proteins. This chain is ATP-dependent Clp protease proteolytic subunit, found in Staphylococcus carnosus (strain TM300).